A 246-amino-acid polypeptide reads, in one-letter code: DNA repair protein RecO (246 aa).

This sequence belongs to the RecO family.

Involved in DNA repair and RecF pathway recombination. The chain is DNA repair protein RecO from Pelobacter propionicus (strain DSM 2379 / NBRC 103807 / OttBd1).